Reading from the N-terminus, the 56-residue chain is Lantibiotic subtilin (56 aa).

Positions 1-24 are excised as a propeptide; sequence MSKFDDFDLDVVKVSKQDSKITPQ. Tryptophan 25 carries the N2-succinyltryptophan; partial modification. A cross-link (lanthionine (Ser-Cys)) is located at residues 27-31; that stretch reads SESLC. Serine 29 is modified (2,3-didehydroalanine (Ser)). 4 cross-links (beta-methyllanthionine (Thr-Cys)) span residues 32 to 35, 37 to 43, 47 to 50, and 49 to 52; these read TPGC, TGALQTC, TLTC, and TCNC. Position 42 is a (Z)-2,3-didehydrobutyrine (threonine 42). Serine 55 carries the 2,3-didehydroalanine (Ser) modification.

The protein belongs to the type A lantibiotic family. Post-translationally, maturation of lantibiotics involves the enzymatic conversion of Thr, and Ser into dehydrated AA and the formation of thioether bonds with cysteine. This is followed by membrane translocation and cleavage of the modified precursor. In terms of processing, succinylated subtilin is 10-20 times less active than subtilin. The ratio subtilin/succinylated subtilin is about 1:2 after 24 hours growth. The 2,3-didehydrobutyrine is determined to be the Z-isomer.

In terms of biological role, lanthionine-containing peptide antibiotic (lantibiotic) active on Gram-positive bacteria. The bactericidal activity of lantibiotics is based on depolarization of energized bacterial cytoplasmic membranes, initiated by the formation of aqueous transmembrane pores. This Bacillus subtilis protein is Lantibiotic subtilin (spaS).